Here is an 82-residue protein sequence, read N- to C-terminus: UPF0180 protein BAA_1480 (82 aa).

This sequence belongs to the UPF0180 family.

The protein is UPF0180 protein BAA_1480 of Bacillus anthracis (strain A0248).